A 209-amino-acid chain; its full sequence is MQHSSVTSPRAAIYQWFSQLLFQELTEAQLVTLGGRESRAWIASLSTIPGLASDVKRFERSLTRVLHREAREQELAADFASLFLLAPPVGVSPYAGHYPHTTPAQERRQMNALLVEQALAPRENEASDHIAIQLALMAEQISREASVATQYYFLQHHILCWAPLFMASCQQREAEGFYVLAVAMIVHFMHEDAQYLESLLMDNVYCRNH.

This sequence belongs to the TorD/DmsD family. TorD subfamily.

It is found in the cytoplasm. Functionally, involved in the biogenesis of TorA. Acts on TorA before the insertion of the molybdenum cofactor and, as a result, probably favors a conformation of the apoenzyme that is competent for acquiring the cofactor. The protein is Chaperone protein TorD of Salmonella bongori (strain ATCC 43975 / DSM 13772 / NCTC 12419).